The chain runs to 314 residues: Ferrochelatase (314 aa).

Residues H184 and E259 each coordinate Fe cation.

Belongs to the ferrochelatase family.

The protein resides in the cytoplasm. The enzyme catalyses heme b + 2 H(+) = protoporphyrin IX + Fe(2+). Its pathway is porphyrin-containing compound metabolism; protoheme biosynthesis; protoheme from protoporphyrin-IX: step 1/1. Functionally, catalyzes the ferrous insertion into protoporphyrin IX. The protein is Ferrochelatase of Chlamydia trachomatis serovar D (strain ATCC VR-885 / DSM 19411 / UW-3/Cx).